Consider the following 106-residue polypeptide: Ribosomal protein eL42-like (106 aa).

A disordered region spans residues 26-53; that stretch reads YKKGKDSLYAQGRRRYDRKQSGYGGQTK. At K53 the chain carries N6-methyllysine.

It belongs to the eukaryotic ribosomal protein eL42 family. Ubiquitously expressed.

Its subcellular location is the cytoplasm. This chain is Ribosomal protein eL42-like (RPL36AL), found in Homo sapiens (Human).